The primary structure comprises 569 residues: Urease subunit beta (569 aa).

The Urease domain maps to 131–569 (GGIDTHIHFI…VSLAQLFSIF (439 aa)). The Ni(2+) site is built by His136, His138, and Lys219. Residue Lys219 is modified to N6-carboxylysine. His221 lines the substrate pocket. His248 and His274 together coordinate Ni(2+). His322 (proton donor) is an active-site residue. A Ni(2+)-binding site is contributed by Asp362.

The protein belongs to the metallo-dependent hydrolases superfamily. Urease alpha subunit family. In terms of assembly, heterohexamer of 3 UreA (alpha) and 3 UreB (beta) subunits. It depends on Ni cation as a cofactor. Post-translationally, carboxylation allows a single lysine to coordinate two nickel ions.

It localises to the cytoplasm. The catalysed reaction is urea + 2 H2O + H(+) = hydrogencarbonate + 2 NH4(+). The protein operates within nitrogen metabolism; urea degradation; CO(2) and NH(3) from urea (urease route): step 1/1. This is Urease subunit beta from Helicobacter pylori (strain HPAG1).